The following is a 405-amino-acid chain: Arginine deiminase (405 aa).

The Amidino-cysteine intermediate role is filled by cysteine 395.

The protein belongs to the arginine deiminase family.

Its subcellular location is the cytoplasm. The enzyme catalyses L-arginine + H2O = L-citrulline + NH4(+). Its pathway is amino-acid degradation; L-arginine degradation via ADI pathway; carbamoyl phosphate from L-arginine: step 1/2. In Rhodococcus opacus (strain B4), this protein is Arginine deiminase.